The following is a 159-amino-acid chain: Ribosome maturation factor RimP (159 aa).

It belongs to the RimP family.

The protein resides in the cytoplasm. In terms of biological role, required for maturation of 30S ribosomal subunits. The chain is Ribosome maturation factor RimP from Streptococcus pneumoniae (strain 70585).